Here is a 234-residue protein sequence, read N- to C-terminus: Ubiquitin thioesterase OTUB2 (234 aa).

An OTU domain is found at Thr-40–Ala-231. Residue Asp-48 is part of the active site. Cys-51 acts as the Nucleophile in catalysis. His-224 is a catalytic residue.

This sequence belongs to the peptidase C65 family. In terms of tissue distribution, widely expressed. Expressed at higher level in brain.

The catalysed reaction is Thiol-dependent hydrolysis of ester, thioester, amide, peptide and isopeptide bonds formed by the C-terminal Gly of ubiquitin (a 76-residue protein attached to proteins as an intracellular targeting signal).. In terms of biological role, hydrolase that can remove conjugated ubiquitin from proteins in vitro and may therefore play an important regulatory role at the level of protein turnover by preventing degradation. Mediates deubiquitination of 'Lys-11'-,'Lys-48'- and 'Lys-63'-linked polyubiquitin chains, with a preference for 'Lys-63'-linked polyubiquitin chains. The protein is Ubiquitin thioesterase OTUB2 (OTUB2) of Homo sapiens (Human).